The following is a 463-amino-acid chain: Bifunctional protein GlmU (463 aa).

The interval 1–228 is pyrophosphorylase; that stretch reads MEQALSIVVL…PAEVQGVNDR (228 aa). UDP-N-acetyl-alpha-D-glucosamine contacts are provided by residues 10–13, Lys24, Gln75, 80–81, 102–104, Gly138, Glu153, Asn168, and Asn226; these read LAAG, GT, and YGD. Asp104 lines the Mg(2+) pocket. Mg(2+) is bound at residue Asn226. The segment at 229-249 is linker; the sequence is VQLAAAERVWQRRQAEDWMRA. The interval 250–463 is N-acetyltransferase; the sequence is GVTILDPDRF…RPDRGEGSDA (214 aa). The UDP-N-acetyl-alpha-D-glucosamine site is built by Arg332 and Lys350. The active-site Proton acceptor is the His362. Tyr365 and Asn376 together coordinate UDP-N-acetyl-alpha-D-glucosamine. Acetyl-CoA contacts are provided by residues Ala379, 385-386, Ser404, Ala422, and Arg439; that span reads NY. Positions 437 to 463 are disordered; the sequence is VARSAQRSIHGWRRPGQRPDRGEGSDA. Basic and acidic residues predominate over residues 453-463; the sequence is QRPDRGEGSDA.

It in the N-terminal section; belongs to the N-acetylglucosamine-1-phosphate uridyltransferase family. In the C-terminal section; belongs to the transferase hexapeptide repeat family. Homotrimer. Mg(2+) is required as a cofactor.

The protein resides in the cytoplasm. The catalysed reaction is alpha-D-glucosamine 1-phosphate + acetyl-CoA = N-acetyl-alpha-D-glucosamine 1-phosphate + CoA + H(+). It carries out the reaction N-acetyl-alpha-D-glucosamine 1-phosphate + UTP + H(+) = UDP-N-acetyl-alpha-D-glucosamine + diphosphate. Its pathway is nucleotide-sugar biosynthesis; UDP-N-acetyl-alpha-D-glucosamine biosynthesis; N-acetyl-alpha-D-glucosamine 1-phosphate from alpha-D-glucosamine 6-phosphate (route II): step 2/2. It functions in the pathway nucleotide-sugar biosynthesis; UDP-N-acetyl-alpha-D-glucosamine biosynthesis; UDP-N-acetyl-alpha-D-glucosamine from N-acetyl-alpha-D-glucosamine 1-phosphate: step 1/1. It participates in bacterial outer membrane biogenesis; LPS lipid A biosynthesis. Its function is as follows. Catalyzes the last two sequential reactions in the de novo biosynthetic pathway for UDP-N-acetylglucosamine (UDP-GlcNAc). The C-terminal domain catalyzes the transfer of acetyl group from acetyl coenzyme A to glucosamine-1-phosphate (GlcN-1-P) to produce N-acetylglucosamine-1-phosphate (GlcNAc-1-P), which is converted into UDP-GlcNAc by the transfer of uridine 5-monophosphate (from uridine 5-triphosphate), a reaction catalyzed by the N-terminal domain. The sequence is that of Bifunctional protein GlmU from Alkalilimnicola ehrlichii (strain ATCC BAA-1101 / DSM 17681 / MLHE-1).